Here is a 260-residue protein sequence, read N- to C-terminus: Acyl-coenzyme A diphosphatase FITM2 (260 aa).

Over 1–23 (MERLENCAQMFQRRFLNESFRRH) the chain is Cytoplasmic. The helical transmembrane segment at 24-44 (CPVLLACIVLGGSLLKELCPL) threads the bilayer. Over 45-57 (PDSYWNNKRNVLN) the chain is Lumenal. Residues 58–78 (VYFVKFSWGWTLWLLLPFIAL) traverse the membrane as a helical segment. Residues 79–93 (TNYKLTRSTTKVLRR) are Cytoplasmic-facing. The helical transmembrane segment at 94–114 (LSSLLVSTLIWYLCTNLFLYI) threads the bilayer. The Lumenal segment spans residues 115–145 (ENITGSCYESEAMSDPKEHQDRRECRLHSGY). A helical membrane pass occupies residues 146-166 (WHGFDISGHCFLLSYCILLIL). H154 is a catalytic residue. Residues 167 to 189 (EETSIISNIRFERHWHRMAINAQ) lie on the Cytoplasmic side of the membrane. Helical transmembrane passes span 190-210 (FAAL…TAVY) and 211-231 (FHNI…WYIT). Residue H212 is part of the active site. The Cytoplasmic segment spans residues 232-260 (YRWWYLQPISPGLPPASASRSGKEPIYRN).

This sequence belongs to the FIT family. FIT2 subfamily.

The protein localises to the endoplasmic reticulum membrane. It carries out the reaction an acyl-CoA + H2O = an acyl-4'-phosphopantetheine + adenosine 3',5'-bisphosphate + 2 H(+). In terms of biological role, fatty acyl-coenzyme A (CoA) diphosphatase that hydrolyzes fatty acyl-CoA to yield acyl-4'-phosphopantetheine and adenosine 3',5'-bisphosphate. Preferentially hydrolyzes unsaturated long-chain acyl-CoA substrates in the endoplasmic reticulum (ER) lumen. This catalytic activity is required for maintaining ER structure and for lipid droplets (LDs) biogenesis, which are lipid storage organelles involved in maintaining lipid and energy homeostasis. May directly bind to diacylglycerol (DAGs) and triacylglycerol, which is also important for LD biogenesis. May support directional budding of nacent LDs from the ER into the cytosol by reducing DAG levels at sites of LD formation. May play a role in the regulation of cell morphology, ER morphology and cytoskeletal organization. The sequence is that of Acyl-coenzyme A diphosphatase FITM2 from Xenopus tropicalis (Western clawed frog).